Here is a 185-residue protein sequence, read N- to C-terminus: ATP synthase subunit b 2 (185 aa).

Residues 1–26 form a disordered region; sequence MAQGHGDAKGTTAHTEAGGGHKAPFP. The chain crosses the membrane as a helical span at residues 37-57; sequence LVSLAIAFVALYLIVSKIALP.

It belongs to the ATPase B chain family. F-type ATPases have 2 components, F(1) - the catalytic core - and F(0) - the membrane proton channel. F(1) has five subunits: alpha(3), beta(3), gamma(1), delta(1), epsilon(1). F(0) has three main subunits: a(1), b(2) and c(10-14). The alpha and beta chains form an alternating ring which encloses part of the gamma chain. F(1) is attached to F(0) by a central stalk formed by the gamma and epsilon chains, while a peripheral stalk is formed by the delta and b chains.

The protein localises to the cell inner membrane. Its function is as follows. F(1)F(0) ATP synthase produces ATP from ADP in the presence of a proton or sodium gradient. F-type ATPases consist of two structural domains, F(1) containing the extramembraneous catalytic core and F(0) containing the membrane proton channel, linked together by a central stalk and a peripheral stalk. During catalysis, ATP synthesis in the catalytic domain of F(1) is coupled via a rotary mechanism of the central stalk subunits to proton translocation. Functionally, component of the F(0) channel, it forms part of the peripheral stalk, linking F(1) to F(0). The b'-subunit is a diverged and duplicated form of b found in plants and photosynthetic bacteria. This is ATP synthase subunit b 2 (atpF2) from Rhodopseudomonas palustris (strain ATCC BAA-98 / CGA009).